Reading from the N-terminus, the 382-residue chain is 2-heptyl-3-hydroxy-4(1H)-quinolone synthase (382 aa).

It belongs to the 3-hydroxybenzoate 6-hydroxylase family.

The enzyme catalyses 2-heptyl-4(1H)-quinolone + NADH + O2 + H(+) = 2-heptyl-3-hydroxy-4(1H)-quinolone + NAD(+) + H2O. Its function is as follows. Involved in the terminal step of the biosynthesis of quinolone which in addition to serve as a potent signal for quorum sensing, chelates iron and promotes the formation of membrane vesicles (MVs). Catalyzes the hydroxylation of 2-heptyl-4-quinolone (C7-HHQ) to yield 2-heptyl-3-hydroxy-4-quinolone (PQS). The polypeptide is 2-heptyl-3-hydroxy-4(1H)-quinolone synthase (pqsH) (Pseudomonas aeruginosa (strain ATCC 15692 / DSM 22644 / CIP 104116 / JCM 14847 / LMG 12228 / 1C / PRS 101 / PAO1)).